Consider the following 336-residue polypeptide: Protease HtpX homolog (336 aa).

Transmembrane regions (helical) follow at residues 7 to 24 (AMLL…GFLI) and 29 to 48 (GMMI…YWNA). His-130 serves as a coordination point for Zn(2+). Residue Glu-131 is part of the active site. His-134 provides a ligand contact to Zn(2+). Helical transmembrane passes span 145–165 (IVAT…FLGG) and 171–191 (PFGF…AMIV). Glu-200 is a Zn(2+) binding site. Residues 278-287 (QQMAGGTQAA) show a composition bias toward low complexity. The disordered stretch occupies residues 278-336 (QQMAGGTQAAPRPTPRQAGEQQPSGPWGQAPQAEQPAEPERPKANPWGRNPTGPKGRWS).

Belongs to the peptidase M48B family. Requires Zn(2+) as cofactor.

It localises to the cell inner membrane. The polypeptide is Protease HtpX homolog (Mesorhizobium japonicum (strain LMG 29417 / CECT 9101 / MAFF 303099) (Mesorhizobium loti (strain MAFF 303099))).